The primary structure comprises 107 residues: uncharacterized protein (107 aa).

The protein localises to the mitochondrion. This is an uncharacterized protein from Arabidopsis thaliana (Mouse-ear cress).